The chain runs to 239 residues: RNA-binding protein 38 (239 aa).

One can recognise an RRM domain in the interval 34–111; that stretch reads TKIFVGGLPY…RKANVNLAYL (78 aa).

Belongs to the RBM38 family.

It is found in the cytoplasm. The protein resides in the cytosol. It localises to the nucleus. RNA-binding protein that specifically bind the 3'-UTR of CDKN1A transcripts, leading to maintain the stability of CDKN1A transcripts, thereby acting as a mediator of the p53/TP53 family to regulate CDKN1A. CDKN1A is a cyclin-dependent kinase inhibitor transcriptionally regulated by the p53/TP53 family to induce cell cycle arrest. Isoform 1, but not isoform 2, has the ability to induce cell cycle arrest in G1 and maintain the stability of CDKN1A transcripts induced by p53/TP53. Also acts as a mRNA splicing factor. Specifically regulates the expression of FGFR2-IIIb, an epithelial cell-specific isoform of FGFR2. Plays a role in myogenic differentiation. In terms of biological role, (Microbial infection) Essential factor for the splicing of the pre-mRNAs of human parvovirus B19 (B19V) and for the expression of B19V 11-kDa protein, which enhances viral replication. The protein is RNA-binding protein 38 (RBM38) of Homo sapiens (Human).